Reading from the N-terminus, the 273-residue chain is Glutamate racemase (273 aa).

Substrate contacts are provided by residues 17–18 (DS) and 49–50 (YG). The active-site Proton donor/acceptor is C80. 81-82 (NT) contacts substrate. C190 (proton donor/acceptor) is an active-site residue. 191–192 (TH) provides a ligand contact to substrate.

Belongs to the aspartate/glutamate racemases family.

The catalysed reaction is L-glutamate = D-glutamate. It participates in cell wall biogenesis; peptidoglycan biosynthesis. Its function is as follows. Provides the (R)-glutamate required for cell wall biosynthesis. The chain is Glutamate racemase from Corynebacterium glutamicum (strain ATCC 13032 / DSM 20300 / JCM 1318 / BCRC 11384 / CCUG 27702 / LMG 3730 / NBRC 12168 / NCIMB 10025 / NRRL B-2784 / 534).